The chain runs to 580 residues: Mitogen-activated protein kinase 12 (580 aa).

Positions 18–38 (RTASGSNQSSNAGEEAASSDL) are disordered. Residues 20–29 (ASGSNQSSNA) are compositionally biased toward polar residues. In terms of domain architecture, Protein kinase spans 87-378 (YQIQEVIGKG…AEEALADPYF (292 aa)). Residues 93-101 (IGKGSYGVV) and Lys116 contribute to the ATP site. Asp213 serves as the catalytic Proton acceptor. Residue Thr249 is modified to Phosphothreonine. The TXY signature appears at 249 to 251 (TDY). Position 251 is a phosphotyrosine (Tyr251). Residues 325 to 506 (ARRYLSTMRK…SADSVARTTV (182 aa)) are required for kinase activity and nuclear localization. Residues 458 to 580 (YSKGERGSPL…LSEQVSRMHS (123 aa)) form a disordered region. The segment covering 502 to 543 (ARTTVSPPMSQDAQQHGSAGQNGVTSTDLSSRSYLKSASISA) has biased composition (polar residues). Over residues 554 to 566 (EPEDDYISEEMEG) the composition is skewed to acidic residues.

The protein belongs to the protein kinase superfamily. CMGC Ser/Thr protein kinase family. MAP kinase subfamily. In terms of assembly, interacts with EREBP1. Dually phosphorylated on Thr-249 and Tyr-251, which activates the enzyme. Phosphorylated on tyrosine residue.

Its subcellular location is the cytoplasm. It is found in the nucleus. The enzyme catalyses L-seryl-[protein] + ATP = O-phospho-L-seryl-[protein] + ADP + H(+). The catalysed reaction is L-threonyl-[protein] + ATP = O-phospho-L-threonyl-[protein] + ADP + H(+). Its activity is regulated as follows. Activated by threonine and tyrosine phosphorylation. Activated in response to hydrogen peroxide, salicylic acid, jasmonic acid, ethylene, fungal elicitor and infection with rice blast fungus (M.grisea). May be involved in defense signaling pathway. Phosphorylates EREBP1 transcriptional activator in vitro. Enhances DNA-binding activity of EREBP1 to the GCC box element of pathogenesis-related (PR) gene promoters. The polypeptide is Mitogen-activated protein kinase 12 (MPK12) (Oryza sativa subsp. japonica (Rice)).